The sequence spans 200 residues: SKP1-like protein 19 (200 aa).

Residues 67-92 (DDVVETHESSTKGDKTVEEAKKKPDD) show a composition bias toward basic and acidic residues. The interval 67 to 109 (DDVVETHESSTKGDKTVEEAKKKPDDVAVPESTEGDDEAEDKK) is disordered. The segment at 132–190 (ILAANYLNVQGLFDLCSKTIADYIKDMTPEEVRELFNIENDFTPEEEEAIRNENAWTFE) is interaction with the F-box domain of F-box proteins.

The protein belongs to the SKP1 family. Part of a SCF (SKP1-cullin-F-box) protein ligase complex. Interacts with CPR1/CPR30. As to expression, expressed in leaves and flowers.

The protein resides in the nucleus. Its pathway is protein modification; protein ubiquitination. In terms of biological role, involved in ubiquitination and subsequent proteasomal degradation of target proteins. Together with CUL1, RBX1 and a F-box protein, it forms a SCF E3 ubiquitin ligase complex. The functional specificity of this complex depends on the type of F-box protein. In the SCF complex, it serves as an adapter that links the F-box protein to CUL1. The sequence is that of SKP1-like protein 19 (ASK19) from Arabidopsis thaliana (Mouse-ear cress).